The following is a 69-amino-acid chain: Snake venom metalloproteinase BnP2 (69 aa).

Residues 1-69 (YIELAVVADH…EWRERDIIPR (69 aa)) form the Peptidase M12B domain. E3 is a binding site for Ca(2+).

The protein belongs to the venom metalloproteinase (M12B) family. P-I subfamily. In terms of assembly, monomer. It depends on Zn(2+) as a cofactor. In terms of tissue distribution, expressed by the venom gland.

Its subcellular location is the secreted. Inhibited by EDTA. In terms of biological role, this protein is a zinc protease from snake venom that is devoid of significant myotoxic and hemorrhagic activities. It hydrolyzes the Aalpha-chain and more slowly the Bbeta-chain of fibrin and fibrinogen, without affecting the gamma-chains. It induces cell detachment and a apoptosis (anoikis) in endothelial cells. This chain is Snake venom metalloproteinase BnP2, found in Bothrops pauloensis (Neuwied's lancehead).